We begin with the raw amino-acid sequence, 470 residues long: AAA-ATPase At5g40000 (470 aa).

An N-terminal signal peptide occupies residues 1–30; the sequence is MMMMGDSFGSIGSSMASLFFLWATIQQIFP. 248-255 is an ATP binding site; the sequence is GPPGTGKS.

This sequence belongs to the AAA ATPase family. BCS1 subfamily. Requires Mg(2+) as cofactor.

It carries out the reaction ATP + H2O = ADP + phosphate + H(+). The chain is AAA-ATPase At5g40000 from Arabidopsis thaliana (Mouse-ear cress).